A 649-amino-acid chain; its full sequence is DNA topoisomerase 3 (649 aa).

The Toprim domain maps to M1–I134. Residues E7, D103, and D105 each contribute to the Mg(2+) site. Positions F155–I603 constitute a Topo IA-type catalytic domain. The interaction with DNA stretch occupies residues S194–Q199. Y328 acts as the O-(5'-phospho-DNA)-tyrosine intermediate in catalysis. Residues F614–E649 form a disordered region.

The protein belongs to the type IA topoisomerase family. It depends on Mg(2+) as a cofactor.

The catalysed reaction is ATP-independent breakage of single-stranded DNA, followed by passage and rejoining.. Its function is as follows. Releases the supercoiling and torsional tension of DNA, which is introduced during the DNA replication and transcription, by transiently cleaving and rejoining one strand of the DNA duplex. Introduces a single-strand break via transesterification at a target site in duplex DNA. The scissile phosphodiester is attacked by the catalytic tyrosine of the enzyme, resulting in the formation of a DNA-(5'-phosphotyrosyl)-enzyme intermediate and the expulsion of a 3'-OH DNA strand. The free DNA strand then undergoes passage around the unbroken strand, thus removing DNA supercoils. Finally, in the religation step, the DNA 3'-OH attacks the covalent intermediate to expel the active-site tyrosine and restore the DNA phosphodiester backbone. The chain is DNA topoisomerase 3 from Salmonella typhimurium (strain LT2 / SGSC1412 / ATCC 700720).